We begin with the raw amino-acid sequence, 367 residues long: Dual specificity protein phosphatase 1 (367 aa).

Residues 20 to 137 (RAAQCLLLDC…FSASCPELCS (118 aa)) enclose the Rhodanese domain. A Tyrosine-protein phosphatase domain is found at 173–314 (GPVEILPFLY…LLQFESQVLA (142 aa)). C258 functions as the Phosphocysteine intermediate in the catalytic mechanism. 2 positions are modified to phosphoserine; by MAPK1 and MAPK3: S359 and S364.

This sequence belongs to the protein-tyrosine phosphatase family. Non-receptor class dual specificity subfamily. In terms of processing, phosphorylation at Ser-359 and Ser-364 by MAPK1/ERK2 and MAPK3/ERK1 reduces its rate of degradation. 'Lys-48'-linked polyubiquitinated by NEURL3, leading to proteasomal degradation. As to expression, expressed at high levels in the lung, liver placenta and pancreas. Moderate levels seen in the heart and skeletal muscle. Lower levels found in the brain and kidney.

It localises to the nucleus. The enzyme catalyses O-phospho-L-tyrosyl-[protein] + H2O = L-tyrosyl-[protein] + phosphate. It catalyses the reaction O-phospho-L-seryl-[protein] + H2O = L-seryl-[protein] + phosphate. It carries out the reaction O-phospho-L-threonyl-[protein] + H2O = L-threonyl-[protein] + phosphate. Its function is as follows. Dual specificity phosphatase that dephosphorylates MAP kinase MAPK1/ERK2 on both 'Thr-183' and 'Tyr-185', regulating its activity during the meiotic cell cycle. The sequence is that of Dual specificity protein phosphatase 1 from Homo sapiens (Human).